We begin with the raw amino-acid sequence, 485 residues long: Glycogen synthase (485 aa).

Residue K20 participates in ADP-alpha-D-glucose binding.

This sequence belongs to the glycosyltransferase 1 family. Bacterial/plant glycogen synthase subfamily.

It catalyses the reaction [(1-&gt;4)-alpha-D-glucosyl](n) + ADP-alpha-D-glucose = [(1-&gt;4)-alpha-D-glucosyl](n+1) + ADP + H(+). The protein operates within glycan biosynthesis; glycogen biosynthesis. In terms of biological role, synthesizes alpha-1,4-glucan chains using ADP-glucose. The sequence is that of Glycogen synthase from Vibrio vulnificus (strain YJ016).